Here is a 303-residue protein sequence, read N- to C-terminus: MPTPDAVCILTPTYNEAETIADVISDYRDEGFANVLVIDGGSTDGTRELAEDAGAHVVVQSGSGKGQAVREAVEDHIQAPYVLMLDGDGTYEATDATKMLDPLTEGYDHVIGDRFADMRPGAMTRLNRVGNRIINRAFAFIHGQDFRDILSGYRAFTRESFLDMTLTSDGFGIETEMAVECAKRGIKTTVVPTTYYPRPDGSDTNLDPIRDGGIIFLELYRRAKTNNPLFYFGSVGFASTATGLGLALYVAYEWVVRSISHEVIAVVSMAGILFGVQLLMFGVLSDLILSLHREQMKRIEELE.

2 helical membrane-spanning segments follow: residues 230–250 (FYFGSVGFASTATGLGLALYV) and 263–283 (VIAVVSMAGILFGVQLLMFGV).

Belongs to the glycosyltransferase 2 family.

The protein localises to the cell membrane. Its pathway is cell surface structure biogenesis; S-layer biogenesis. Functionally, involved in the assembly of a N-linked pentasaccharide that decorates the S-layer glycoprotein and flagellins. Adds the first hexose subunit of the pentasaccharide to the dolichol phosphate carrier. The chain is Glycosyltransferase AglJ (aglJ) from Haloferax volcanii (strain ATCC 29605 / DSM 3757 / JCM 8879 / NBRC 14742 / NCIMB 2012 / VKM B-1768 / DS2) (Halobacterium volcanii).